Reading from the N-terminus, the 248-residue chain is 14-3-3 protein zeta (248 aa).

The protein belongs to the 14-3-3 family. As to quaternary structure, homodimer.

Its subcellular location is the cytoplasm. In terms of biological role, adapter protein implicated in the regulation of a large spectrum of both general and specialized signaling pathways. Binds to a large number of partners, usually by recognition of a phosphoserine or phosphothreonine motif. Binding generally results in the modulation of the activity of the binding partner. This chain is 14-3-3 protein zeta (14-3-3zeta), found in Aedes aegypti (Yellowfever mosquito).